A 319-amino-acid polypeptide reads, in one-letter code: Inactive hydroxysteroid dehydrogenase-like protein 1 (319 aa).

Residues 2 to 82 form a required for mitochondria translocation region; the sequence is AAVDSFQLLY…CGASEAIAKA (81 aa). NADP(+) contacts are provided by residues 74–80, Lys-99, and Asp-125; that span reads GASEAIA.

Belongs to the short-chain dehydrogenases/reductases (SDR) family. 17-beta-HSD 3 subfamily.

The protein localises to the mitochondrion. In Danio rerio (Zebrafish), this protein is Inactive hydroxysteroid dehydrogenase-like protein 1 (hsdl1).